Consider the following 292-residue polypeptide: 4-amino-L-phenylalanine/4-methylamino-L-phenylalanine methyltransferase (292 aa).

128–132 (CAGPG) serves as a coordination point for S-adenosyl-L-methionine.

It belongs to the protein N5-glutamine methyltransferase family.

It carries out the reaction 4-amino-L-phenylalanine + S-adenosyl-L-methionine = 4-methylamino-L-phenylalanine + S-adenosyl-L-homocysteine + H(+). It catalyses the reaction 4-methylamino-L-phenylalanine + S-adenosyl-L-methionine = 4-dimethylamino-L-phenylalanine + S-adenosyl-L-homocysteine + H(+). The protein operates within antibiotic biosynthesis. Functionally, involved in pristinamycin I biosynthesis. Catalyzes the SAM-dependent methylation of 4-amino-L-phenylalanine (PAPA) to 4-methylamino-L-phenylalanine (MMPAPA), and of MMPAPA to 4-dimethylamino-L-phenylalanine (DMPAPA). In Streptomyces pristinaespiralis, this protein is 4-amino-L-phenylalanine/4-methylamino-L-phenylalanine methyltransferase.